Here is a 1069-residue protein sequence, read N- to C-terminus: Carbamoyl phosphate synthase large chain (1069 aa).

The segment at 1 to 401 is carboxyphosphate synthetic domain; sequence MPLNKDIKKV…AFLKGIRSLE (401 aa). 12 residues coordinate ATP: R129, R169, G175, G176, K208, V210, E215, G241, I242, H243, Q284, and E298. The ATP-grasp 1 domain occupies 133 to 327; the sequence is RDMMNRIGEP…IAKLAAKIAL (195 aa). Mg(2+) contacts are provided by Q284, E298, and N300. Mn(2+) is bound by residues Q284, E298, and N300. The interval 402–549 is oligomerization domain; the sequence is IGKYSLDHKK…YSTYEQYDEV (148 aa). Residues 550–932 form a carbamoyl phosphate synthetic domain region; sequence EVSNRRKVIV…ALYKGFVGAN (383 aa). The ATP-grasp 2 domain maps to 674–864; the sequence is DELLERLDIS…IVDIATQVMM (191 aa). ATP contacts are provided by R710, K749, L751, E755, G780, V781, H782, S783, Q823, and E835. Residues Q823, E835, and N837 each coordinate Mg(2+). Positions 823, 835, and 837 each coordinate Mn(2+). Residues 932–1069 enclose the MGS-like domain; the sequence is NMYPSKEKGK…KDLEVFDITK (138 aa). Residues 933–1069 are allosteric domain; it reads MYPSKEKGKI…KDLEVFDITK (137 aa).

This sequence belongs to the CarB family. In terms of assembly, composed of two chains; the small (or glutamine) chain promotes the hydrolysis of glutamine to ammonia, which is used by the large (or ammonia) chain to synthesize carbamoyl phosphate. Tetramer of heterodimers (alpha,beta)4. The cofactor is Mg(2+). Requires Mn(2+) as cofactor.

It catalyses the reaction hydrogencarbonate + L-glutamine + 2 ATP + H2O = carbamoyl phosphate + L-glutamate + 2 ADP + phosphate + 2 H(+). It carries out the reaction hydrogencarbonate + NH4(+) + 2 ATP = carbamoyl phosphate + 2 ADP + phosphate + 2 H(+). The protein operates within amino-acid biosynthesis; L-arginine biosynthesis; carbamoyl phosphate from bicarbonate: step 1/1. It participates in pyrimidine metabolism; UMP biosynthesis via de novo pathway; (S)-dihydroorotate from bicarbonate: step 1/3. Functionally, large subunit of the glutamine-dependent carbamoyl phosphate synthetase (CPSase). CPSase catalyzes the formation of carbamoyl phosphate from the ammonia moiety of glutamine, carbonate, and phosphate donated by ATP, constituting the first step of 2 biosynthetic pathways, one leading to arginine and/or urea and the other to pyrimidine nucleotides. The large subunit (synthetase) binds the substrates ammonia (free or transferred from glutamine from the small subunit), hydrogencarbonate and ATP and carries out an ATP-coupled ligase reaction, activating hydrogencarbonate by forming carboxy phosphate which reacts with ammonia to form carbamoyl phosphate. The protein is Carbamoyl phosphate synthase large chain of Clostridium botulinum (strain Eklund 17B / Type B).